Here is a 303-residue protein sequence, read N- to C-terminus: UDP-3-O-acyl-N-acetylglucosamine deacetylase (303 aa).

H78, H237, and D241 together coordinate Zn(2+). Residue H264 is the Proton donor of the active site.

This sequence belongs to the LpxC family. Requires Zn(2+) as cofactor.

It catalyses the reaction a UDP-3-O-[(3R)-3-hydroxyacyl]-N-acetyl-alpha-D-glucosamine + H2O = a UDP-3-O-[(3R)-3-hydroxyacyl]-alpha-D-glucosamine + acetate. Its pathway is glycolipid biosynthesis; lipid IV(A) biosynthesis; lipid IV(A) from (3R)-3-hydroxytetradecanoyl-[acyl-carrier-protein] and UDP-N-acetyl-alpha-D-glucosamine: step 2/6. In terms of biological role, catalyzes the hydrolysis of UDP-3-O-myristoyl-N-acetylglucosamine to form UDP-3-O-myristoylglucosamine and acetate, the committed step in lipid A biosynthesis. The sequence is that of UDP-3-O-acyl-N-acetylglucosamine deacetylase from Pseudomonas putida (strain GB-1).